The sequence spans 250 residues: PF03932 family protein CutC (250 aa).

This sequence belongs to the CutC family.

The protein localises to the cytoplasm. The chain is PF03932 family protein CutC from Proteus mirabilis (strain HI4320).